Reading from the N-terminus, the 1770-residue chain is Probable outer membrane protein PmpC (1770 aa).

The N-terminal stretch at 1 to 20 (MKFMSATAVFAAALSSVTEA) is a signal peptide. 5 disordered regions span residues 73 to 109 (LPRK…ELDN), 264 to 311 (EDTL…GKGG), 481 to 505 (PAAP…TNSD), 611 to 818 (ESTP…STTE), and 1271 to 1329 (LRII…TSRT). Residues 85–97 (SPTTEGVSSSSSG) show a composition bias toward low complexity. Positions 268–285 (DSTPETEQTESNGNQDGS) are enriched in polar residues. Composition is skewed to low complexity over residues 294 to 303 (SESPESTPSP) and 496 to 505 (QTETSDTNSD). Polar residues-rich tracts occupy residues 631 to 675 (TEDP…TGNA) and 682 to 703 (QDST…QSNE). Composition is skewed to low complexity over residues 719–748 (ESVS…GDQS) and 762–802 (STDS…GDSA). The span at 1303-1319 (NNDASNQGESANGSSSP) shows a compositional bias: polar residues. Residues 1477–1770 (EEVSYNNLWI…MMNCGARMTF (294 aa)) form the Autotransporter domain.

It belongs to the PMP outer membrane protein family.

It is found in the secreted. The protein localises to the cell wall. The protein resides in the cell outer membrane. The sequence is that of Probable outer membrane protein PmpC (pmpC) from Chlamydia trachomatis serovar D (strain ATCC VR-885 / DSM 19411 / UW-3/Cx).